The primary structure comprises 301 residues: Lipoyl synthase (301 aa).

C53, C58, C64, C79, C83, C86, and S290 together coordinate [4Fe-4S] cluster. The 215-residue stretch at 65–279 folds into the Radical SAM core domain; the sequence is WSRKTATYML…RIYGKSIGFK (215 aa).

The protein belongs to the radical SAM superfamily. Lipoyl synthase family. The cofactor is [4Fe-4S] cluster.

Its subcellular location is the cytoplasm. The enzyme catalyses [[Fe-S] cluster scaffold protein carrying a second [4Fe-4S](2+) cluster] + N(6)-octanoyl-L-lysyl-[protein] + 2 oxidized [2Fe-2S]-[ferredoxin] + 2 S-adenosyl-L-methionine + 4 H(+) = [[Fe-S] cluster scaffold protein] + N(6)-[(R)-dihydrolipoyl]-L-lysyl-[protein] + 4 Fe(3+) + 2 hydrogen sulfide + 2 5'-deoxyadenosine + 2 L-methionine + 2 reduced [2Fe-2S]-[ferredoxin]. Its pathway is protein modification; protein lipoylation via endogenous pathway; protein N(6)-(lipoyl)lysine from octanoyl-[acyl-carrier-protein]: step 2/2. Its function is as follows. Catalyzes the radical-mediated insertion of two sulfur atoms into the C-6 and C-8 positions of the octanoyl moiety bound to the lipoyl domains of lipoate-dependent enzymes, thereby converting the octanoylated domains into lipoylated derivatives. This chain is Lipoyl synthase, found in Leptospira interrogans serogroup Icterohaemorrhagiae serovar Lai (strain 56601).